The primary structure comprises 248 residues: 3-deoxy-manno-octulosonate cytidylyltransferase (248 aa).

The protein belongs to the KdsB family.

Its subcellular location is the cytoplasm. The catalysed reaction is 3-deoxy-alpha-D-manno-oct-2-ulosonate + CTP = CMP-3-deoxy-beta-D-manno-octulosonate + diphosphate. It participates in nucleotide-sugar biosynthesis; CMP-3-deoxy-D-manno-octulosonate biosynthesis; CMP-3-deoxy-D-manno-octulosonate from 3-deoxy-D-manno-octulosonate and CTP: step 1/1. It functions in the pathway bacterial outer membrane biogenesis; lipopolysaccharide biosynthesis. In terms of biological role, activates KDO (a required 8-carbon sugar) for incorporation into bacterial lipopolysaccharide in Gram-negative bacteria. The chain is 3-deoxy-manno-octulosonate cytidylyltransferase from Klebsiella pneumoniae subsp. pneumoniae (strain ATCC 700721 / MGH 78578).